Here is a 1101-residue protein sequence, read N- to C-terminus: Rho GTPase-activating protein 30 (1101 aa).

The Rho-GAP domain maps to 20–215; it reads CDLREHLQHS…FILTHVDQLF (196 aa). 2 disordered regions span residues 305–397 and 450–499; these read RKLP…VRAL and LQPR…LEDS. Basic and acidic residues predominate over residues 309-319; the sequence is LRVEDREEKSS. The span at 348 to 367 shows a compositional bias: low complexity; the sequence is SSSSQPSSLMPESLESNSME. Residues 451–465 are compositionally biased toward pro residues; the sequence is QPRPSPALGPGPPGS. Serine 578 is modified (phosphoserine). The interval 622–848 is disordered; it reads LGPKPINWEG…EQKSIDVETE (227 aa). Basic and acidic residues-rich tracts occupy residues 659-677, 686-762, 786-821, and 829-844; these read TRQEKEAKPRSTSDNREEA, EAGK…KGDD, EVVHKHEAEKGRESETKELRRKSDLKSREDQGHSED, and DDRKEGVFSKEQKSID. Phosphoserine is present on serine 875. Disordered stretches follow at residues 878–901 and 968–987; these read EINEQTSEMKQAPLQPSEPEGMEA and CPRPGRLDGTPGEKAWGSRA. Serine 996 is subject to Phosphoserine. Residues 1044–1076 are disordered; that stretch reads SRPLSCLERPPEGTEGSEPRSRLSLPPRELHPV. Residues 1052 to 1064 show a composition bias toward basic and acidic residues; the sequence is RPPEGTEGSEPRS.

Interacts with RHOU in a GTP-independent manner.

The protein resides in the cytoplasmic vesicle. Its function is as follows. GTPase-activating protein (GAP) for RAC1 and RHOA, but not for CDC42. The chain is Rho GTPase-activating protein 30 (Arhgap30) from Mus musculus (Mouse).